The primary structure comprises 293 residues: Probable porphobilinogen deaminase (293 aa).

Cys233 bears the S-(dipyrrolylmethanemethyl)cysteine mark.

It belongs to the HMBS family. It depends on dipyrromethane as a cofactor.

The catalysed reaction is 4 porphobilinogen + H2O = hydroxymethylbilane + 4 NH4(+). Its pathway is porphyrin-containing compound metabolism; protoporphyrin-IX biosynthesis; coproporphyrinogen-III from 5-aminolevulinate: step 2/4. In terms of biological role, tetrapolymerization of the monopyrrole PBG into the hydroxymethylbilane pre-uroporphyrinogen in several discrete steps. In Saccharolobus islandicus (strain Y.G.57.14 / Yellowstone #1) (Sulfolobus islandicus), this protein is Probable porphobilinogen deaminase.